Here is a 389-residue protein sequence, read N- to C-terminus: Aspartate aminotransferase (389 aa).

Positions 34 and 171 each coordinate L-aspartate. At Lys233 the chain carries N6-(pyridoxal phosphate)lysine. Arg362 contacts L-aspartate.

Belongs to the class-I pyridoxal-phosphate-dependent aminotransferase family. In terms of assembly, homodimer. Pyridoxal 5'-phosphate serves as cofactor.

The protein localises to the cytoplasm. The enzyme catalyses L-aspartate + 2-oxoglutarate = oxaloacetate + L-glutamate. The protein is Aspartate aminotransferase (aspC) of Pyrococcus abyssi (strain GE5 / Orsay).